Reading from the N-terminus, the 317-residue chain is Transcriptional regulator LsrR (317 aa).

A DNA-binding region (H-T-H motif) is located at residues 33–56 (QSEISDRLGLTRLKVSRLLEKGHQ).

This sequence belongs to the SorC transcriptional regulatory family.

Its subcellular location is the cytoplasm. Inactivated by phosphorylated autoinducer-2 (phospho-AI-2). Phospho-AI-2 acts by binding to LsrR, which is then unable to bind to the promoter regions, allowing the transcription of the target genes. Functionally, transcriptional regulator that represses the expression of the lsr operon in the absence of the quorum-sensing signaling molecule autoinducer 2 (AI-2). It also represses the expression of the lsrRK operon. Acts by binding directly to the lsrA and lsrR promoter regions. In the presence of phosphorylated autoinducer-2 (phospho-AI-2), LsrR is inactivated, leading to the transcription of the genes. The protein is Transcriptional regulator LsrR (lsrR) of Escherichia coli O139:H28 (strain E24377A / ETEC).